Reading from the N-terminus, the 274-residue chain is Diaminopimelate epimerase (274 aa).

Residues N11, Q44, and N64 each contribute to the substrate site. C73 acts as the Proton donor in catalysis. Substrate-binding positions include 74–75 (GN), N157, N190, and 208–209 (ER). Catalysis depends on C217, which acts as the Proton acceptor. Residue 218 to 219 (GS) coordinates substrate.

The protein belongs to the diaminopimelate epimerase family. Homodimer.

The protein localises to the cytoplasm. It carries out the reaction (2S,6S)-2,6-diaminopimelate = meso-2,6-diaminopimelate. The protein operates within amino-acid biosynthesis; L-lysine biosynthesis via DAP pathway; DL-2,6-diaminopimelate from LL-2,6-diaminopimelate: step 1/1. Its function is as follows. Catalyzes the stereoinversion of LL-2,6-diaminopimelate (L,L-DAP) to meso-diaminopimelate (meso-DAP), a precursor of L-lysine and an essential component of the bacterial peptidoglycan. This chain is Diaminopimelate epimerase, found in Edwardsiella ictaluri (strain 93-146).